The sequence spans 509 residues: Lysine--tRNA ligase (509 aa).

Residues E418 and E425 each contribute to the Mg(2+) site.

It belongs to the class-II aminoacyl-tRNA synthetase family. As to quaternary structure, homodimer. Mg(2+) is required as a cofactor.

It is found in the cytoplasm. It catalyses the reaction tRNA(Lys) + L-lysine + ATP = L-lysyl-tRNA(Lys) + AMP + diphosphate. This chain is Lysine--tRNA ligase (lysS), found in Acinetobacter baylyi (strain ATCC 33305 / BD413 / ADP1).